Consider the following 932-residue polypeptide: 2-oxoglutarate dehydrogenase E1 component (932 aa).

Belongs to the alpha-ketoglutarate dehydrogenase family. Homodimer. Part of the 2-oxoglutarate dehydrogenase (OGDH) complex composed of E1 (2-oxoglutarate dehydrogenase), E2 (dihydrolipoamide succinyltransferase) and E3 (dihydrolipoamide dehydrogenase); the complex contains multiple copies of the three enzymatic components (E1, E2 and E3). Requires thiamine diphosphate as cofactor.

It carries out the reaction N(6)-[(R)-lipoyl]-L-lysyl-[protein] + 2-oxoglutarate + H(+) = N(6)-[(R)-S(8)-succinyldihydrolipoyl]-L-lysyl-[protein] + CO2. E1 component of the 2-oxoglutarate dehydrogenase (OGDH) complex which catalyzes the decarboxylation of 2-oxoglutarate, the first step in the conversion of 2-oxoglutarate to succinyl-CoA and CO(2). The sequence is that of 2-oxoglutarate dehydrogenase E1 component from Staphylococcus aureus (strain USA300).